Reading from the N-terminus, the 132-residue chain is MALSDPIGDMLTRIRNGQRARKSSVMAPASTMRANVLDVLIREGYIRGYEKVDVRKGIAELRVELKYHEGEPVIREIARVSTPGRRVYSKIKDLPKVYNGLGISILSTPRGVMSDHEARQANVGGEVLCRVF.

The protein belongs to the universal ribosomal protein uS8 family. Part of the 30S ribosomal subunit. Contacts proteins S5 and S12.

Its function is as follows. One of the primary rRNA binding proteins, it binds directly to 16S rRNA central domain where it helps coordinate assembly of the platform of the 30S subunit. The chain is Small ribosomal subunit protein uS8 from Rhodospirillum rubrum (strain ATCC 11170 / ATH 1.1.1 / DSM 467 / LMG 4362 / NCIMB 8255 / S1).